The sequence spans 231 residues: AA9 family lytic polysaccharide monooxygenase F (231 aa).

An N-terminal signal peptide occupies residues 1 to 17; that stretch reads MLPSISLLLAAALGTSA. His-18, Asp-50, and His-89 together coordinate Cu(2+). An O2-binding site is contributed by Asp-50. Cystine bridges form between Cys-59/Cys-177 and Cys-147/Cys-231. His-163 and Gln-172 together coordinate O2. Tyr-174 is a binding site for Cu(2+).

This sequence belongs to the polysaccharide monooxygenase AA9 family. Cu(2+) serves as cofactor.

The protein localises to the secreted. It catalyses the reaction [(1-&gt;4)-beta-D-glucosyl]n+m + reduced acceptor + O2 = 4-dehydro-beta-D-glucosyl-[(1-&gt;4)-beta-D-glucosyl]n-1 + [(1-&gt;4)-beta-D-glucosyl]m + acceptor + H2O.. Its function is as follows. Lytic polysaccharide monooxygenase (LPMO) that depolymerizes crystalline and amorphous polysaccharides via the oxidation of scissile alpha- or beta-(1-4)-glycosidic bonds, yielding C1 oxidation products. Catalysis by LPMOs requires the reduction of the active-site copper from Cu(II) to Cu(I) by a reducing agent and H(2)O(2) or O(2) as a cosubstrate. The polypeptide is AA9 family lytic polysaccharide monooxygenase F (gh61-6) (Neurospora crassa (strain ATCC 24698 / 74-OR23-1A / CBS 708.71 / DSM 1257 / FGSC 987)).